A 583-amino-acid polypeptide reads, in one-letter code: Aspartate--tRNA ligase (583 aa).

Glutamate 174 is an L-aspartate binding site. The interval 198 to 201 (QTFK) is aspartate. Arginine 220 contributes to the L-aspartate binding site. ATP is bound by residues 220–222 (RDE) and glutamine 229. Histidine 445 provides a ligand contact to L-aspartate. Glutamate 479 contacts ATP. Arginine 486 provides a ligand contact to L-aspartate. 531–534 (GLDR) contributes to the ATP binding site.

This sequence belongs to the class-II aminoacyl-tRNA synthetase family. Type 1 subfamily. Homodimer.

It is found in the cytoplasm. It carries out the reaction tRNA(Asp) + L-aspartate + ATP = L-aspartyl-tRNA(Asp) + AMP + diphosphate. Catalyzes the attachment of L-aspartate to tRNA(Asp) in a two-step reaction: L-aspartate is first activated by ATP to form Asp-AMP and then transferred to the acceptor end of tRNA(Asp). The polypeptide is Aspartate--tRNA ligase (Flavobacterium psychrophilum (strain ATCC 49511 / DSM 21280 / CIP 103535 / JIP02/86)).